The primary structure comprises 74 residues: Large ribosomal subunit protein bL31 (74 aa).

The protein belongs to the bacterial ribosomal protein bL31 family. Type A subfamily. As to quaternary structure, part of the 50S ribosomal subunit.

Its function is as follows. Binds the 23S rRNA. This chain is Large ribosomal subunit protein bL31, found in Xanthobacter autotrophicus (strain ATCC BAA-1158 / Py2).